The chain runs to 138 residues: MVEYDYEELLERAYEQLPEEVLEDRRFEMPKPKVSVEGKTTVIRNFKEISKKLDRDPEHITKYFLKELGTAGHVDGGRLILHGVYHPKLVEEELKNYVEEFVLCPECGKPDTKLVREDRQWILKCEACGAWSSVRRLK.

Belongs to the eIF-2-beta/eIF-5 family. In terms of assembly, heterotrimer composed of an alpha, a beta and a gamma chain.

Functionally, eIF-2 functions in the early steps of protein synthesis by forming a ternary complex with GTP and initiator tRNA. The polypeptide is Translation initiation factor 2 subunit beta (Methanopyrus kandleri (strain AV19 / DSM 6324 / JCM 9639 / NBRC 100938)).